Here is a 363-residue protein sequence, read N- to C-terminus: MPRKIRVLIVDDSASVRQTMTEILESDPGIEVIGTAPDPYVAARRIQQEVPDVITLDVEMPRMDGITFLRKIMAQRPIPVVVCSSLTETDSETASQAWEAGAVEIILKPRVGTAQFLLESKIHICDVVKAAAGARLRSMPAAGRANRPRVPEKKLTADAVLPPPVAGRNAMARTTESVICIGASTGGTESLREVLEALPAASPAIVIVQHMPEKFTEAFARRLDSLCDMEVKEAVDGDTVMRGRVLIAPGNHHMLLQRSGARYYVSVKDGPLVSRHRPSVDVLFRSAASHAGSNAVGIIMTGMGDDGARGLLEMRKAGAYTIAQDEATSVVFGMPKEAIALGAADKILPLEMLAMEILRAGNR.

Positions 6–123 constitute a Response regulatory domain; the sequence is RVLIVDDSAS…AQFLLESKIH (118 aa). 4-aspartylphosphate is present on aspartate 57. The CheB-type methylesterase domain occupies 172–363; it reads ARTTESVICI…AMEILRAGNR (192 aa). Residues serine 184, histidine 210, and aspartate 306 contribute to the active site.

The protein belongs to the CheB family. Post-translationally, phosphorylated by CheA. Phosphorylation of the N-terminal regulatory domain activates the methylesterase activity.

It localises to the cytoplasm. It catalyses the reaction [protein]-L-glutamate 5-O-methyl ester + H2O = L-glutamyl-[protein] + methanol + H(+). The enzyme catalyses L-glutaminyl-[protein] + H2O = L-glutamyl-[protein] + NH4(+). In terms of biological role, involved in chemotaxis. Part of a chemotaxis signal transduction system that modulates chemotaxis in response to various stimuli. Catalyzes the demethylation of specific methylglutamate residues introduced into the chemoreceptors (methyl-accepting chemotaxis proteins or MCP) by CheR. Also mediates the irreversible deamidation of specific glutamine residues to glutamic acid. The sequence is that of Protein-glutamate methylesterase/protein-glutamine glutaminase 2 from Rhodospirillum rubrum (strain ATCC 11170 / ATH 1.1.1 / DSM 467 / LMG 4362 / NCIMB 8255 / S1).